The chain runs to 400 residues: Phosphoglycerate kinase (400 aa).

Residues 22–24 (DFN), Arg-38, 61–64 (HLGR), Arg-119, and Arg-152 contribute to the substrate site. ATP-binding positions include Lys-205, Gly-296, Glu-327, and 353–356 (GGDT).

Belongs to the phosphoglycerate kinase family. In terms of assembly, monomer.

The protein resides in the cytoplasm. It carries out the reaction (2R)-3-phosphoglycerate + ATP = (2R)-3-phospho-glyceroyl phosphate + ADP. It functions in the pathway carbohydrate degradation; glycolysis; pyruvate from D-glyceraldehyde 3-phosphate: step 2/5. This chain is Phosphoglycerate kinase, found in Campylobacter lari (strain RM2100 / D67 / ATCC BAA-1060).